The sequence spans 279 residues: Small ribosomal subunit protein uS3 (279 aa).

The region spanning 17-86 (VDEYFLEKLE…NPQIDVQEVK (70 aa)) is the KH type-2 domain. 2 stretches are compositionally biased toward low complexity: residues 206-233 (AEKK…STAA) and 241-252 (ESEAAEAVTPEG). Positions 206 to 279 (AEKKSPAAGA…VVKTDGDSQS (74 aa)) are disordered.

Belongs to the universal ribosomal protein uS3 family. In terms of assembly, part of the 30S ribosomal subunit.

Its function is as follows. Binds the lower part of the 30S subunit head. The chain is Small ribosomal subunit protein uS3 from Methanocella arvoryzae (strain DSM 22066 / NBRC 105507 / MRE50).